The chain runs to 342 residues: Dihydroorotate dehydrogenase (quinone) (342 aa).

FMN contacts are provided by residues 60–64 (AGLDK) and threonine 84. Lysine 64 lines the substrate pocket. A substrate-binding site is contributed by 109-113 (NRMGF). Asparagine 137 and asparagine 170 together coordinate FMN. Asparagine 170 contacts substrate. Serine 173 functions as the Nucleophile in the catalytic mechanism. Position 175 (asparagine 175) interacts with substrate. FMN-binding residues include lysine 215 and threonine 243. 244–245 (NT) contacts substrate. Residues glycine 266, glycine 295, and 316 to 317 (YS) each bind FMN.

The protein belongs to the dihydroorotate dehydrogenase family. Type 2 subfamily. Monomer. FMN is required as a cofactor.

Its subcellular location is the cell membrane. It catalyses the reaction (S)-dihydroorotate + a quinone = orotate + a quinol. It participates in pyrimidine metabolism; UMP biosynthesis via de novo pathway; orotate from (S)-dihydroorotate (quinone route): step 1/1. Its function is as follows. Catalyzes the conversion of dihydroorotate to orotate with quinone as electron acceptor. The polypeptide is Dihydroorotate dehydrogenase (quinone) (Nitrosomonas eutropha (strain DSM 101675 / C91 / Nm57)).